Reading from the N-terminus, the 410-residue chain is Probable serine/threonine-protein kinase PBL9 (410 aa).

Gly-2 carries N-myristoyl glycine lipidation. Cys-4 is lipidated: S-palmitoyl cysteine. The tract at residues 11–46 (AESSGASTKYDAKDIGSLGSKASSVSVRPSPRTEGE) is disordered. Positions 68-352 (FRPDSVLGEG…MSEVVSHLEH (285 aa)) constitute a Protein kinase domain. ATP contacts are provided by residues 74–82 (LGEGGFGCV) and Lys-106. Position 151 is a phosphotyrosine (Tyr-151). The Proton acceptor role is filled by Asp-203. Ser-207 and Ser-237 each carry phosphoserine. Phosphothreonine is present on residues Thr-238 and Thr-243. Tyr-251 is modified (phosphotyrosine).

It belongs to the protein kinase superfamily. Ser/Thr protein kinase family. As to quaternary structure, interacts with the Xanthomonas campestris effector XopAC/AvrAC. As to expression, expressed in stomatal guard cells of leaves.

Its subcellular location is the cell membrane. It catalyses the reaction L-seryl-[protein] + ATP = O-phospho-L-seryl-[protein] + ADP + H(+). It carries out the reaction L-threonyl-[protein] + ATP = O-phospho-L-threonyl-[protein] + ADP + H(+). Its function is as follows. Possible bi-functional kinase. In vitro, it exhibits serine/threonine activity. In vivo, can phosphorylate tyrosine residues of limited substrates. May be involved in plant defense signaling. This Arabidopsis thaliana (Mouse-ear cress) protein is Probable serine/threonine-protein kinase PBL9.